Reading from the N-terminus, the 189-residue chain is dCTP deaminase (189 aa).

Residues 112–117, 136–138, glutamine 157, tyrosine 171, and glutamine 181 each bind dCTP; these read KSTYAR and TLE. The Proton donor/acceptor role is filled by glutamate 138.

Belongs to the dCTP deaminase family. Homotrimer.

It catalyses the reaction dCTP + H2O + H(+) = dUTP + NH4(+). The protein operates within pyrimidine metabolism; dUMP biosynthesis; dUMP from dCTP (dUTP route): step 1/2. Its function is as follows. Catalyzes the deamination of dCTP to dUTP. The chain is dCTP deaminase from Burkholderia orbicola (strain MC0-3).